Reading from the N-terminus, the 459-residue chain is Probable 3-ketoacyl-CoA synthase 14 (459 aa).

The first 25 residues, 1-25, serve as a signal peptide directing secretion; the sequence is MFIAMADFKLLLLILILLSLFELDL. Residues 32–52 form a helical membrane-spanning segment; sequence FFSPFPVKIGLLLISIFFYAY. Positions 52-334 constitute an FAE domain; it reads YSTTRSKPVY…FILFLVKSKL (283 aa). Active-site residues include H268, H352, H356, H385, and N389.

Belongs to the thiolase-like superfamily. Chalcone/stilbene synthases family. As to expression, expressed in siliques.

The protein resides in the membrane. The catalysed reaction is a very-long-chain acyl-CoA + malonyl-CoA + H(+) = a very-long-chain 3-oxoacyl-CoA + CO2 + CoA. It participates in lipid metabolism; fatty acid biosynthesis. The protein is Probable 3-ketoacyl-CoA synthase 14 of Arabidopsis thaliana (Mouse-ear cress).